The primary structure comprises 62 residues: Short neurotoxin C (62 aa).

The span at 1–16 (RRCFNQQSSQPQTNKS) shows a compositional bias: polar residues. Residues 1–21 (RRCFNQQSSQPQTNKSCPPGE) form a disordered region. 4 cysteine pairs are disulfide-bonded: C3–C24, C17–C41, C43–C54, and C55–C60.

It belongs to the three-finger toxin family. Short-chain subfamily. Type I alpha-neurotoxin sub-subfamily. As to expression, expressed by the venom gland.

The protein resides in the secreted. Binds to muscle nicotinic acetylcholine receptor (nAChR) and inhibit acetylcholine from binding to the receptor, thereby impairing neuromuscular transmission. In Laticauda crockeri (Crocker's sea snake), this protein is Short neurotoxin C.